Reading from the N-terminus, the 699-residue chain is Elongation factor G (699 aa).

The tr-type G domain occupies 8-288; sequence EDYRNFGIMA…AVVDYLPSPM (281 aa). GTP is bound by residues 17 to 24, 86 to 90, and 140 to 143; these read AHIDAGKT, DTPGH, and NKMD.

Belongs to the TRAFAC class translation factor GTPase superfamily. Classic translation factor GTPase family. EF-G/EF-2 subfamily.

It localises to the cytoplasm. In terms of biological role, catalyzes the GTP-dependent ribosomal translocation step during translation elongation. During this step, the ribosome changes from the pre-translocational (PRE) to the post-translocational (POST) state as the newly formed A-site-bound peptidyl-tRNA and P-site-bound deacylated tRNA move to the P and E sites, respectively. Catalyzes the coordinated movement of the two tRNA molecules, the mRNA and conformational changes in the ribosome. This Rhizobium johnstonii (strain DSM 114642 / LMG 32736 / 3841) (Rhizobium leguminosarum bv. viciae) protein is Elongation factor G.